The chain runs to 677 residues: Testis-specific Y-encoded-like protein 2 (677 aa).

The disordered stretch occupies residues 1 to 54 (MDRPDEGPPAKTPRLSSSEPRQRDLPPPPPPPLQRLPLPPPQQRPRPQEETEAA). Residue Lys-11 forms a Glycyl lysine isopeptide (Lys-Gly) (interchain with G-Cter in SUMO2) linkage. The residue at position 18 (Ser-18) is a Phosphoserine. Positions 25 to 44 (LPPPPPPPLQRLPLPPPQQR) are enriched in pro residues. Residues Lys-158 and Lys-160 each participate in a glycyl lysine isopeptide (Lys-Gly) (interchain with G-Cter in SUMO2) cross-link. The segment at 175 to 202 (KESVRRRQRRRRRRRKQRKAKESRERSA) is disordered. Residues 178 to 193 (VRRRQRRRRRRRKQRK) show a composition bias toward basic residues. Phosphothreonine is present on Thr-333. A disordered region spans residues 469-658 (ANENLCDSEN…EVNSEDSDIQ (190 aa)). Positions 484 to 493 (GYNTKITDNK) are enriched in polar residues. The span at 509–525 (EKNTYDSEDSNSEKADG) shows a compositional bias: basic and acidic residues. The segment covering 526–540 (DNTTLRDNQQVTNIQ) has biased composition (polar residues). 2 stretches are compositionally biased toward acidic residues: residues 543 to 581 (SDSD…DDDD) and 606 to 627 (DYEE…ETSE). The span at 639–650 (DERIYGEERSEV) shows a compositional bias: basic and acidic residues. Ser-648, Ser-652, and Ser-655 each carry phosphoserine.

This sequence belongs to the nucleosome assembly protein (NAP) family. Interacts with histones. Interacts with CASK. Part of a complex containing CASK, TBR1 and TSPYL2. In terms of processing, phosphorylation at Thr-333 impairs function on cell proliferation. As to expression, present at high levels in the pituitary gland and at moderate levels in adrenal gland, brain, testis and ovary. In brain, expressed both in mature neurons and progenitor cells (at protein level).

It is found in the nucleus. It localises to the cytoplasm. Part of the CASK/TBR1/TSPYL2 transcriptional complex which modulates gene expression in response to neuronal synaptic activity, probably by facilitating nucleosome assembly. May inhibit cell proliferation by inducing p53-dependent CDKN1A expression. This chain is Testis-specific Y-encoded-like protein 2 (Tspyl2), found in Mus musculus (Mouse).